The following is a 39-amino-acid chain: Large ribosomal subunit protein bL12 (39 aa).

It belongs to the bacterial ribosomal protein bL12 family. In terms of assembly, homodimer. Part of the ribosomal stalk of the 50S ribosomal subunit. Forms a multimeric L10(L12)X complex, where L10 forms an elongated spine to which 2 to 4 L12 dimers bind in a sequential fashion. Binds GTP-bound translation factors.

Functionally, forms part of the ribosomal stalk which helps the ribosome interact with GTP-bound translation factors. Is thus essential for accurate translation. The sequence is that of Large ribosomal subunit protein bL12 (rplL) from Arthrobacter glacialis.